A 312-amino-acid chain; its full sequence is Olfactory receptor 2L3 (312 aa).

At Met1 to Leu24 the chain is on the extracellular side. An N-linked (GlcNAc...) asparagine glycan is attached at Asn5. A helical transmembrane segment spans residues Phe25–Ile48. Over Phe49–Thr56 the chain is Cytoplasmic. Residues Pro57–Pro78 traverse the membrane as a helical segment. Residues Lys79–Gln99 lie on the Extracellular side of the membrane. Asn88 carries an N-linked (GlcNAc...) asparagine glycan. A disulfide bridge links Cys96 with Cys188. The chain crosses the membrane as a helical span at residues Ser100–Tyr119. Topologically, residues Asp120–Arg138 are cytoplasmic. A helical membrane pass occupies residues Met139–Ala157. Residues His158 to Tyr194 lie on the Extracellular side of the membrane. Residues Glu195–Gly218 traverse the membrane as a helical segment. Residues Arg219–Lys235 are Cytoplasmic-facing. Residues Ala236–Tyr258 form a helical membrane-spanning segment. Residues Leu259–Lys271 lie on the Extracellular side of the membrane. A helical membrane pass occupies residues Val272–Leu291. Topologically, residues Arg292–Met312 are cytoplasmic.

It belongs to the G-protein coupled receptor 1 family.

It is found in the cell membrane. In terms of biological role, odorant receptor. The polypeptide is Olfactory receptor 2L3 (OR2L3) (Homo sapiens (Human)).